We begin with the raw amino-acid sequence, 1199 residues long: Tubulin-specific chaperone D (1199 aa).

2 disordered regions span residues 1–23 (MALS…VEDA) and 337–361 (QHSI…QDDV). Acidic residues predominate over residues 14–23 (DPVEDPVEDA). HEAT repeat units follow at residues 368-406 (VIEQ…ADDV), 603-639 (EHTA…ARSL), 757-793 (AAAQ…PAFF), and 1111-1147 (GDVR…VLTY).

Belongs to the TBCD family. As to quaternary structure, found in a complex with at least ARL2, PPP2CB, PPP2R1A, PPP2R2A, PPP2R5E and TBCD. Interacts with PPP2CB. Part of a supercomplex made of cofactors A to E. Cofactors A and D function by capturing and stabilizing tubulin in a quasi-native conformation. Cofactor E binds to the cofactor D-tubulin complex; interaction with cofactor C then causes the release of tubulin polypeptides that are committed to the native state. Interacts with ARL2; interaction is enhanced with the GDP-bound form of ARL2. Does not interact with ARL3, ARL4A and ARL4D. Interacts with beta tubulin. Interacts with TBCE.

It is found in the cell junction. It localises to the tight junction. The protein resides in the lateral cell membrane. The protein localises to the cytoplasm. Its subcellular location is the adherens junction. It is found in the cytoskeleton. It localises to the microtubule organizing center. The protein resides in the centrosome. In terms of biological role, tubulin-folding protein implicated in the first step of the tubulin folding pathway and required for tubulin complex assembly. Involved in the regulation of microtubule polymerization or depolymerization, it modulates microtubule dynamics by capturing GTP-bound beta-tubulin (TUBB). Its ability to interact with beta tubulin is regulated via its interaction with ARL2. Acts as a GTPase-activating protein (GAP) for ARL2. Induces microtubule disruption in absence of ARL2. Increases degradation of beta tubulin, when overexpressed in polarized cells. Promotes epithelial cell detachment, a process antagonized by ARL2. Induces tight adherens and tight junctions disassembly at the lateral cell membrane. Required for correct assembly and maintenance of the mitotic spindle, and proper progression of mitosis. Involved in neuron morphogenesis. The sequence is that of Tubulin-specific chaperone D (TBCD) from Bos taurus (Bovine).